A 263-amino-acid chain; its full sequence is Phosphatidylglycerol--prolipoprotein diacylglyceryl transferase (263 aa).

Transmembrane regions (helical) follow at residues 6 to 26 (VIFS…VLGI), 50 to 70 (LLTA…VLIY), 85 to 105 (TWEG…AVII), and 112 to 132 (IPTF…LFLG). Arg-133 is a binding site for a 1,2-diacyl-sn-glycero-3-phospho-(1'-sn-glycerol). Transmembrane regions (helical) follow at residues 169–189 (LYEA…LFFL), 197–217 (GALT…VEFF), and 233–253 (MGQL…LGAL).

Belongs to the Lgt family.

It is found in the cell membrane. The catalysed reaction is L-cysteinyl-[prolipoprotein] + a 1,2-diacyl-sn-glycero-3-phospho-(1'-sn-glycerol) = an S-1,2-diacyl-sn-glyceryl-L-cysteinyl-[prolipoprotein] + sn-glycerol 1-phosphate + H(+). It functions in the pathway protein modification; lipoprotein biosynthesis (diacylglyceryl transfer). Its function is as follows. Catalyzes the transfer of the diacylglyceryl group from phosphatidylglycerol to the sulfhydryl group of the N-terminal cysteine of a prolipoprotein, the first step in the formation of mature lipoproteins. The chain is Phosphatidylglycerol--prolipoprotein diacylglyceryl transferase from Wolbachia pipientis wMel.